A 196-amino-acid polypeptide reads, in one-letter code: GTP cyclohydrolase 1 (196 aa).

The Zn(2+) site is built by Cys84, His87, and Cys157.

Belongs to the GTP cyclohydrolase I family. Toroid-shaped homodecamer, composed of two pentamers of five dimers.

It catalyses the reaction GTP + H2O = 7,8-dihydroneopterin 3'-triphosphate + formate + H(+). Its pathway is cofactor biosynthesis; 7,8-dihydroneopterin triphosphate biosynthesis; 7,8-dihydroneopterin triphosphate from GTP: step 1/1. This chain is GTP cyclohydrolase 1, found in Corynebacterium glutamicum (strain ATCC 13032 / DSM 20300 / JCM 1318 / BCRC 11384 / CCUG 27702 / LMG 3730 / NBRC 12168 / NCIMB 10025 / NRRL B-2784 / 534).